We begin with the raw amino-acid sequence, 1172 residues long: Serine/threonine-protein kinase Nek10 (1172 aa).

The stretch at 209–251 (GAHKTLVNLLGARDTNVLLGSLLALASLAESQECREKISELNI) is one ARM repeat. Positions 481–514 (YEELVSKLNLLVEDELKQIAENIESINQNKAPLK) form a coiled coil. In terms of domain architecture, Protein kinase spans 519–712 (YAILDHLGSG…SEPYGEKADV (194 aa)). ATP-binding positions include 525 to 533 (LGSGAFGCV) and Lys548. Asp655 functions as the Proton acceptor in the catalytic mechanism. Disordered regions lie at residues 855–875 (SELS…YGKD) and 898–954 (TYSE…GSRP). The span at 919–945 (PLKESTFNILKRSFSASGGERQSQTRD) shows a compositional bias: polar residues.

It belongs to the protein kinase superfamily. NEK Ser/Thr protein kinase family. NIMA subfamily. Interacts with RAF1 and MAP2K1; the interaction is direct with RAF1 and required for ERK1/2-signaling pathway activation in response to UV irradiation. It depends on Mg(2+) as a cofactor. Expressed in the lung.

The catalysed reaction is L-seryl-[protein] + ATP = O-phospho-L-seryl-[protein] + ADP + H(+). The enzyme catalyses L-threonyl-[protein] + ATP = O-phospho-L-threonyl-[protein] + ADP + H(+). In terms of biological role, plays a role in the cellular response to UV irradiation. Mediates G2/M cell cycle arrest, MEK autoactivation and ERK1/2-signaling pathway activation in response to UV irradiation. In ciliated cells of airways, it is involved in the regulation of mucociliary transport. In Homo sapiens (Human), this protein is Serine/threonine-protein kinase Nek10.